The following is a 202-amino-acid chain: MEAALLGLCNWSTLGVCAALKLPQISAVLAARSARGLSLPSLLLELAGFLVFLRYQCYYGYPPLTYLEYPILIAQDVILLLCIFHFNGNVKQATPYIAVLVSSWFILALQKWIIDLAMNLCTFISAASKFAQLQCLWKTRDSGTVSALTWSLSSYTCATRIITTLMTTNDFTILLRFVIMLALNIWVTVTVLRYRKTAIKAE.

Residues 1 to 19 form the signal peptide; the sequence is MEAALLGLCNWSTLGVCAA. Transmembrane regions (helical) follow at residues 33-53, 64-84, 97-117, and 171-191; these read SARGLSLPSLLLELAGFLVFL, LTYLEYPILIAQDVILLLCIF, IAVLVSSWFILALQKWIIDLA, and FTILLRFVIMLALNIWVTVTV.

Its subcellular location is the membrane. The polypeptide is Solute carrier family 66 member 3 (Homo sapiens (Human)).